The following is a 123-amino-acid chain: Small ribosomal subunit protein uS12 (123 aa).

The interval 1–22 is disordered; sequence MATINQLVRKPRKRKAKTSDVR. At Asp-89 the chain carries 3-methylthioaspartic acid. Positions 101 to 123 are disordered; the sequence is ALDTSGVNDRKRGRSKYGTKRPK. Residues 111-123 are compositionally biased toward basic residues; that stretch reads KRGRSKYGTKRPK.

Belongs to the universal ribosomal protein uS12 family. As to quaternary structure, part of the 30S ribosomal subunit. Contacts proteins S8 and S17. May interact with IF1 in the 30S initiation complex.

With S4 and S5 plays an important role in translational accuracy. Its function is as follows. Interacts with and stabilizes bases of the 16S rRNA that are involved in tRNA selection in the A site and with the mRNA backbone. Located at the interface of the 30S and 50S subunits, it traverses the body of the 30S subunit contacting proteins on the other side and probably holding the rRNA structure together. The combined cluster of proteins S8, S12 and S17 appears to hold together the shoulder and platform of the 30S subunit. This is Small ribosomal subunit protein uS12 from Teredinibacter turnerae (strain ATCC 39867 / T7901).